The primary structure comprises 129 residues: uncharacterized protein (129 aa).

The segment covering 1–13 (MSDVAETVVAQEP) has biased composition (low complexity). Residues 1–129 (MSDVAETVVA…SGDAPAVAAE (129 aa)) form a disordered region. The segment covering 34–94 (IDEKTSEQNG…KRVSSAHEEA (61 aa)) has biased composition (basic and acidic residues). The segment covering 117–129 (VAASGDAPAVAAE) has biased composition (low complexity).

This is an uncharacterized protein from Caenorhabditis elegans.